A 155-amino-acid chain; its full sequence is SsrA-binding protein (155 aa).

The protein belongs to the SmpB family.

The protein localises to the cytoplasm. In terms of biological role, required for rescue of stalled ribosomes mediated by trans-translation. Binds to transfer-messenger RNA (tmRNA), required for stable association of tmRNA with ribosomes. tmRNA and SmpB together mimic tRNA shape, replacing the anticodon stem-loop with SmpB. tmRNA is encoded by the ssrA gene; the 2 termini fold to resemble tRNA(Ala) and it encodes a 'tag peptide', a short internal open reading frame. During trans-translation Ala-aminoacylated tmRNA acts like a tRNA, entering the A-site of stalled ribosomes, displacing the stalled mRNA. The ribosome then switches to translate the ORF on the tmRNA; the nascent peptide is terminated with the 'tag peptide' encoded by the tmRNA and targeted for degradation. The ribosome is freed to recommence translation, which seems to be the essential function of trans-translation. This is SsrA-binding protein from Streptococcus pneumoniae serotype 4 (strain ATCC BAA-334 / TIGR4).